The primary structure comprises 197 residues: Probable GTP-binding protein EngB (197 aa).

The 173-residue stretch at 25–197 (SAPEIAFAGR…VRDEFFKFTR (173 aa)) folds into the EngB-type G domain. Residues 33–40 (GRSNVGKS), 60–64 (GCTRQ), 79–82 (DLPG), 146–149 (TKID), and 177–179 (MSI) each bind GTP. The Mg(2+) site is built by Ser40 and Thr62.

Belongs to the TRAFAC class TrmE-Era-EngA-EngB-Septin-like GTPase superfamily. EngB GTPase family. Mg(2+) is required as a cofactor.

Necessary for normal cell division and for the maintenance of normal septation. This chain is Probable GTP-binding protein EngB, found in Wolbachia sp. subsp. Drosophila simulans (strain wRi).